Consider the following 214-residue polypeptide: Osteoclast-stimulating factor 1 (214 aa).

Residues Gly12 to Glu71 enclose the SH3 domain. ANK repeat units follow at residues Thr72–Gly101, Ala105–Gln135, and Leu139–Ile168.

As to expression, ubiquitously expressed.

It is found in the cytoplasm. Functionally, induces bone resorption, acting probably through a signaling cascade which results in the secretion of factor(s) enhancing osteoclast formation and activity. The polypeptide is Osteoclast-stimulating factor 1 (ostf1) (Monopterus albus (Swamp eel)).